The chain runs to 418 residues: Light-independent protochlorophyllide reductase subunit N (418 aa).

Residues Cys-17, Cys-42, and Cys-103 each coordinate [4Fe-4S] cluster.

It belongs to the BchN/ChlN family. Protochlorophyllide reductase is composed of three subunits; ChlL, ChlN and ChlB. Forms a heterotetramer of two ChlB and two ChlN subunits. [4Fe-4S] cluster is required as a cofactor.

The catalysed reaction is chlorophyllide a + oxidized 2[4Fe-4S]-[ferredoxin] + 2 ADP + 2 phosphate = protochlorophyllide a + reduced 2[4Fe-4S]-[ferredoxin] + 2 ATP + 2 H2O. The protein operates within porphyrin-containing compound metabolism; chlorophyll biosynthesis (light-independent). In terms of biological role, component of the dark-operative protochlorophyllide reductase (DPOR) that uses Mg-ATP and reduced ferredoxin to reduce ring D of protochlorophyllide (Pchlide) to form chlorophyllide a (Chlide). This reaction is light-independent. The NB-protein (ChlN-ChlB) is the catalytic component of the complex. In Prochlorococcus marinus (strain MIT 9215), this protein is Light-independent protochlorophyllide reductase subunit N.